Consider the following 341-residue polypeptide: tRNA N6-adenosine threonylcarbamoyltransferase (341 aa).

The Fe cation site is built by His111 and His115. Residues 134 to 138 (LVSGG), Asp167, Gly180, and Asn276 each bind substrate. Residue Asp304 participates in Fe cation binding.

This sequence belongs to the KAE1 / TsaD family. The cofactor is Fe(2+).

The protein localises to the cytoplasm. It catalyses the reaction L-threonylcarbamoyladenylate + adenosine(37) in tRNA = N(6)-L-threonylcarbamoyladenosine(37) in tRNA + AMP + H(+). Functionally, required for the formation of a threonylcarbamoyl group on adenosine at position 37 (t(6)A37) in tRNAs that read codons beginning with adenine. Is involved in the transfer of the threonylcarbamoyl moiety of threonylcarbamoyl-AMP (TC-AMP) to the N6 group of A37, together with TsaE and TsaB. TsaD likely plays a direct catalytic role in this reaction. This Pseudomonas fluorescens (strain ATCC BAA-477 / NRRL B-23932 / Pf-5) protein is tRNA N6-adenosine threonylcarbamoyltransferase.